The chain runs to 91 residues: DNA-directed RNA polymerase subunit Rpo11 (91 aa).

It belongs to the archaeal Rpo11/eukaryotic RPB11/RPC19 RNA polymerase subunit family. As to quaternary structure, part of the RNA polymerase complex.

Its subcellular location is the cytoplasm. The catalysed reaction is RNA(n) + a ribonucleoside 5'-triphosphate = RNA(n+1) + diphosphate. In terms of biological role, DNA-dependent RNA polymerase (RNAP) catalyzes the transcription of DNA into RNA using the four ribonucleoside triphosphates as substrates. In Methanococcoides burtonii (strain DSM 6242 / NBRC 107633 / OCM 468 / ACE-M), this protein is DNA-directed RNA polymerase subunit Rpo11.